The following is a 417-amino-acid chain: D-amino acid dehydrogenase (417 aa).

FAD is bound at residue 3-17 (VVILGSGVIGVTSAW).

It belongs to the DadA oxidoreductase family. FAD serves as cofactor.

The catalysed reaction is a D-alpha-amino acid + A + H2O = a 2-oxocarboxylate + AH2 + NH4(+). It participates in amino-acid degradation; D-alanine degradation; NH(3) and pyruvate from D-alanine: step 1/1. Its function is as follows. Oxidative deamination of D-amino acids. This is D-amino acid dehydrogenase from Edwardsiella ictaluri (strain 93-146).